The primary structure comprises 859 residues: DNA mismatch repair protein MutS (859 aa).

An ATP-binding site is contributed by 617 to 624 (GPNMGGKS). The tract at residues 801–820 (TSLPHEVAPQAPGKPSVPQQ) is disordered.

It belongs to the DNA mismatch repair MutS family.

Its function is as follows. This protein is involved in the repair of mismatches in DNA. It is possible that it carries out the mismatch recognition step. This protein has a weak ATPase activity. In Pseudomonas fluorescens (strain ATCC BAA-477 / NRRL B-23932 / Pf-5), this protein is DNA mismatch repair protein MutS.